The sequence spans 303 residues: Coenzyme PQQ synthesis protein B (303 aa).

This sequence belongs to the PqqB family.

It functions in the pathway cofactor biosynthesis; pyrroloquinoline quinone biosynthesis. May be involved in the transport of PQQ or its precursor to the periplasm. The chain is Coenzyme PQQ synthesis protein B from Pseudomonas fluorescens (strain Pf0-1).